A 67-amino-acid chain; its full sequence is Large ribosomal subunit protein bL35 (67 aa).

Belongs to the bacterial ribosomal protein bL35 family.

The sequence is that of Large ribosomal subunit protein bL35 from Picosynechococcus sp. (strain ATCC 27264 / PCC 7002 / PR-6) (Agmenellum quadruplicatum).